The primary structure comprises 675 residues: TOM1-like protein 9 (675 aa).

The VHS domain maps to 9 to 138; that stretch reads ATSEMLIGPD…ELLRAGAVFP (130 aa). Disordered regions lie at residues 144–181, 270–322, 371–524, 542–561, and 622–675; these read SAPV…EPEF, LPGT…QLAL, FSDN…YAQM, QNGV…GYQP, and RDQT…AGTM. One can recognise a GAT domain in the interval 180–268; that stretch reads EFPTLSLSEI…VLTNYEAIAS (89 aa). Composition is skewed to polar residues over residues 299–317 and 372–435; these read GDSS…NGVL and SDNT…GQGV. Low complexity predominate over residues 436-451; it reads SSPWSSQPAQQPVQPS. Composition is skewed to polar residues over residues 470-481 and 488-524; these read QDYSPSAESGSP and PTQT…YAQM. Residues 646–661 are compositionally biased toward basic and acidic residues; that stretch reads NKPEDKLFGDLVDISK.

Belongs to the TOM1 family. In terms of assembly, interacts with ELC/VPS23A and ELCL/VPS23B. As to expression, ubiquitously expressed.

The protein localises to the cytoplasm. It localises to the membrane. Might contribute to the loading of the ESCRT machinery. This is TOM1-like protein 9 from Arabidopsis thaliana (Mouse-ear cress).